Here is a 213-residue protein sequence, read N- to C-terminus: Dimethylamine corrinoid protein 1 (213 aa).

Residues 1 to 90 (MSKEELLQEL…LMPEGSASSK (90 aa)) enclose the B12-binding N-terminal domain. Residues 91 to 213 (MGVIVNGTVE…AVAKAKELLA (123 aa)) form the B12-binding domain. A methylcob(III)alamin-binding site is contributed by His-104.

The protein belongs to the methylamine corrinoid protein family.

It functions in the pathway one-carbon metabolism; methanogenesis from dimethylamine. Functionally, acts as a methyl group carrier between MtbB and MtbA. The polypeptide is Dimethylamine corrinoid protein 1 (mtbC1) (Methanosarcina acetivorans (strain ATCC 35395 / DSM 2834 / JCM 12185 / C2A)).